Reading from the N-terminus, the 324-residue chain is NADH-ubiquinone oxidoreductase chain 1 (324 aa).

8 helical membrane-spanning segments follow: residues 3-23 (FILSLIGSLLLIICVLVSVAF), 77-97 (ISPIFSLFLSLFVWMCMPFFV), 104-124 (LGGLFFLCCTSLGVYTVMVAG), 150-170 (LALIMLSFIFLIGSYNMIYFF), 174-194 (IYMWFLIILFPMSLVWLTISL), 226-246 (LIFMAEYASILFMSMLFCVIF), 250-270 (DVFNLLFYVKLTFISFVFIWA), and 297-317 (YLLFFIGFKILLFSFLLWIFF).

The protein belongs to the complex I subunit 1 family.

It localises to the mitochondrion inner membrane. It carries out the reaction a ubiquinone + NADH + 5 H(+)(in) = a ubiquinol + NAD(+) + 4 H(+)(out). Its function is as follows. Core subunit of the mitochondrial membrane respiratory chain NADH dehydrogenase (Complex I) that is believed to belong to the minimal assembly required for catalysis. Complex I functions in the transfer of electrons from NADH to the respiratory chain. The immediate electron acceptor for the enzyme is believed to be ubiquinone. This is NADH-ubiquinone oxidoreductase chain 1 (mt:ND1) from Drosophila yakuba (Fruit fly).